Here is a 244-residue protein sequence, read N- to C-terminus: Robin (244 aa).

This Acanthamoeba polyphaga (Amoeba) protein is Robin.